We begin with the raw amino-acid sequence, 117 residues long: Large ribosomal subunit protein bL20c (117 aa).

It belongs to the bacterial ribosomal protein bL20 family.

It localises to the plastid. Its subcellular location is the chloroplast. Binds directly to 23S ribosomal RNA and is necessary for the in vitro assembly process of the 50S ribosomal subunit. It is not involved in the protein synthesizing functions of that subunit. The polypeptide is Large ribosomal subunit protein bL20c (rpl20) (Bigelowiella natans (Pedinomonas minutissima)).